Here is a 249-residue protein sequence, read N- to C-terminus: Methyltransferase 1 (249 aa).

Belongs to the FkbM methyltransferase family.

The protein operates within secondary metabolite biosynthesis. Its function is as follows. Methyltransferase; part of the pathway that mediates the biosynthesis of tenellin-type 2-pyridones, iron-chelating compounds involved in iron stress tolerance, competition with the natural competitor fungus Metarhizium robertsii and insect hosts infection. Methylates pyridovericin-N-O-(beta-D-glucopyranoside) produced by the UDP-glucosyltransferase GT1 to yield pyridovericin-N-O-(4-O-methyl-beta-D-glucopyranoside) (PMGP). The pathway begins with the assembly of the polyketide-amino acid backbone by the hybrid PKS-NRPS tenS with the help of the enoyl reductase tenC. These enzymes catalyze the synthesis of the pyrrolidine-2-dione intermediates pretellinin A, 11-hydropretellenin A, 12-hydropretellenin A, 13-hydropretellenin A, 14-hydropretellenin A, 12-oxopretellenin A and prototellinin D. The cytochrome P450 monooxygenase tenA then catalyzes an oxidative ring expansion of pretenellin A and 14-hydropretellenin A to form the 2-pyridone core, leading to pretenellin B and pyridovericin, respectively. The cytochrome P450 monooxygenase tenB is then required for the selective N-hydroxylation of the 2-pyridone nitrogen of yield tellinin and 15-hydroxytellenin (15-HT), respectively. The UDP-glucosyltransferase GT1 and the methyltransferase MT1, located outside the tenS gene cluster, contribute to the stepwise glycosylation and methylation of 15-HT to obtain the glycoside pyridovericin-N-O-(4-O-methyl-beta-D-glucopyranoside) (PMGP). Additional related compounds such as 1-O-methyl-15-HT, (8Z)-1-O-methyl-15-HT, and O-methyltenellin A are also produced but the enzymes involved in their biosynthesis have still to be determined. This chain is Methyltransferase 1, found in Beauveria bassiana (strain ARSEF 2860) (White muscardine disease fungus).